Here is a 289-residue protein sequence, read N- to C-terminus: Zinc finger matrin-type protein 3 (289 aa).

Residues 1-59 (MILLQHAGLPPPKRPSSSPPMSVAARSTGALQLPPQKPFGQEASLPLAGEEEPPKGGEQ) form a disordered region. The span at 9 to 18 (LPPPKRPSSS) shows a compositional bias: pro residues. Matrin-type zinc fingers lie at residues 70 to 100 (LYCK…KLRN) and 147 to 177 (DYCK…RLRL). The segment covering 180 to 191 (AQSNSFSDSSEV) has biased composition (polar residues). Residues 180-200 (AQSNSFSDSSEVGQRRTRKEG) form a disordered region. The Matrin-type 3 zinc-finger motif lies at 246-276 (FYCSMCNVGAGEEVEFRQHLESKQHKSKVSE).

Interacts with dsRNA.

The protein resides in the nucleus. It is found in the nucleolus. Its function is as follows. Acts as a bona fide target gene of p53/TP53. May play a role in the TP53-dependent growth regulatory pathway. May contribute to TP53-mediated apoptosis by regulation of TP53 expression and translocation to the nucleus and nucleolus. This Bos taurus (Bovine) protein is Zinc finger matrin-type protein 3.